Here is a 104-residue protein sequence, read N- to C-terminus: Thioredoxin (104 aa).

Positions 2 to 104 (AIVKVTDADF…NLAEVLDKHL (103 aa)) constitute a Thioredoxin domain. A disulfide bridge connects residues Cys29 and Cys32.

The protein belongs to the thioredoxin family.

In terms of biological role, component of the thioredoxin-thioredoxin reductase system. Participates in various redox reactions through the reversible oxidation of its active center dithiol to a disulfide and catalyzes dithiol-disulfide exchange reactions. The chain is Thioredoxin (trxA) from Staphylococcus aureus (strain N315).